The following is a 346-amino-acid chain: Methylthioribose-1-phosphate isomerase (346 aa).

Residues 48-50, R91, and Q196 contribute to the substrate site; that span reads RGA. The active-site Proton donor is D237. Residue 247–248 participates in substrate binding; the sequence is NK.

Belongs to the eIF-2B alpha/beta/delta subunits family. MtnA subfamily.

The catalysed reaction is 5-(methylsulfanyl)-alpha-D-ribose 1-phosphate = 5-(methylsulfanyl)-D-ribulose 1-phosphate. It functions in the pathway amino-acid biosynthesis; L-methionine biosynthesis via salvage pathway; L-methionine from S-methyl-5-thio-alpha-D-ribose 1-phosphate: step 1/6. Its function is as follows. Catalyzes the interconversion of methylthioribose-1-phosphate (MTR-1-P) into methylthioribulose-1-phosphate (MTRu-1-P). This chain is Methylthioribose-1-phosphate isomerase, found in Thermosipho africanus (strain TCF52B).